The following is a 158-amino-acid chain: Large ribosomal subunit protein uL23 (158 aa).

Residues 1-43 form a disordered region; that stretch reads MPPKSSTKAEPKASSAKTQVAKAKSAKKAVVKGTSSKTQRRIR. Residues 12–23 show a composition bias toward low complexity; the sequence is KASSAKTQVAKA.

Belongs to the universal ribosomal protein uL23 family.

Functionally, this protein binds to a specific region on the 26S rRNA. This chain is Large ribosomal subunit protein uL23, found in Puccinia graminis (Black stem rust fungus).